The primary structure comprises 440 residues: D-serine dehydratase (440 aa).

An N6-(pyridoxal phosphate)lysine modification is found at Lys-116.

It belongs to the serine/threonine dehydratase family. DsdA subfamily. As to quaternary structure, monomer. Pyridoxal 5'-phosphate is required as a cofactor.

It catalyses the reaction D-serine = pyruvate + NH4(+). The chain is D-serine dehydratase from Salmonella typhimurium (strain LT2 / SGSC1412 / ATCC 700720).